Consider the following 1295-residue polypeptide: Phosphoribosylformylglycinamidine synthase (1295 aa).

The tract at residues 305–327 (WPGAATGSGGEIRDEGATGRGAK) is disordered. Residues 307 to 318 (GAATGSGGEIRD), 386 to 388 (TGY), and Ala-678 contribute to the ATP site. Residues Asp-679, Glu-718, Asn-722, and Asp-884 each coordinate Mg(2+). Ser-886 is a binding site for ATP. The region spanning 1041–1295 (KVAVLREQGG…IFRNARKQLG (255 aa)) is the Glutamine amidotransferase type-1 domain. Cys-1135 acts as the Nucleophile in catalysis. Catalysis depends on residues His-1260 and Glu-1262.

In the N-terminal section; belongs to the FGAMS family. Monomer.

It is found in the cytoplasm. It carries out the reaction N(2)-formyl-N(1)-(5-phospho-beta-D-ribosyl)glycinamide + L-glutamine + ATP + H2O = 2-formamido-N(1)-(5-O-phospho-beta-D-ribosyl)acetamidine + L-glutamate + ADP + phosphate + H(+). It functions in the pathway purine metabolism; IMP biosynthesis via de novo pathway; 5-amino-1-(5-phospho-D-ribosyl)imidazole from N(2)-formyl-N(1)-(5-phospho-D-ribosyl)glycinamide: step 1/2. Its function is as follows. Phosphoribosylformylglycinamidine synthase involved in the purines biosynthetic pathway. Catalyzes the ATP-dependent conversion of formylglycinamide ribonucleotide (FGAR) and glutamine to yield formylglycinamidine ribonucleotide (FGAM) and glutamate. The protein is Phosphoribosylformylglycinamidine synthase of Salmonella choleraesuis (strain SC-B67).